Reading from the N-terminus, the 329-residue chain is Malate dehydrogenase (329 aa).

Residue 12–18 coordinates NAD(+); sequence GAAGQIG. Residues Arg93 and Arg99 each contribute to the substrate site. Residues Asn106, Gln113, and 130–132 contribute to the NAD(+) site; that span reads VGN. Residues Asn132 and Arg163 each coordinate substrate. His188 functions as the Proton acceptor in the catalytic mechanism.

Belongs to the LDH/MDH superfamily. MDH type 2 family.

It carries out the reaction (S)-malate + NAD(+) = oxaloacetate + NADH + H(+). In terms of biological role, catalyzes the reversible oxidation of malate to oxaloacetate. This is Malate dehydrogenase from Streptomyces griseus subsp. griseus (strain JCM 4626 / CBS 651.72 / NBRC 13350 / KCC S-0626 / ISP 5235).